The sequence spans 417 residues: Lissencephaly-1 homolog (417 aa).

The 33-residue stretch at 7–39 folds into the LisH domain; the sequence is QKEELNRAIADYLFANGYVKALNAFREESQLAG. The stretch at 54–86 forms a coiled coil; the sequence is TSVIRLQKKVMDLEAKLNEAEKEFQSMQNAIGF. WD repeat units lie at residues 120-159, 162-203, 204-243, 246-285, 288-340, 343-382, and 385-417; these read GHRS…FEHT, GHTD…KTLT, GHDH…CTKT, GHTE…CQVV, GHEH…CLFV, GHDN…CHKT, and AHSH…WDCR.

Belongs to the WD repeat LIS1/nudF family.

The protein resides in the cytoplasm. Its subcellular location is the cytoskeleton. The protein localises to the microtubule organizing center. It localises to the centrosome. Functionally, positively regulates the activity of the minus-end directed microtubule motor protein dynein. May enhance dynein-mediated microtubule sliding by targeting dynein to the microtubule plus end. Required for several dynein- and microtubule-dependent processes. This Schistosoma mansoni (Blood fluke) protein is Lissencephaly-1 homolog.